Consider the following 534-residue polypeptide: Peptide chain release factor 3 (534 aa).

A tr-type G domain is found at 9–278 (SRRRTFAIIS…FFVEHAPSPQ (270 aa)). Residues 18–25 (SHPDAGKT), 86–90 (DTPGH), and 140–143 (NKLD) each bind GTP.

The protein belongs to the TRAFAC class translation factor GTPase superfamily. Classic translation factor GTPase family. PrfC subfamily.

It localises to the cytoplasm. In terms of biological role, increases the formation of ribosomal termination complexes and stimulates activities of RF-1 and RF-2. It binds guanine nucleotides and has strong preference for UGA stop codons. It may interact directly with the ribosome. The stimulation of RF-1 and RF-2 is significantly reduced by GTP and GDP, but not by GMP. In Stenotrophomonas maltophilia (strain K279a), this protein is Peptide chain release factor 3.